The primary structure comprises 398 residues: Cytochrome P450 165B3 (398 aa).

A heme-binding site is contributed by cysteine 347.

The protein belongs to the cytochrome P450 family. Heme is required as a cofactor.

It functions in the pathway antibiotic biosynthesis; vancomycin biosynthesis. Functionally, involved in the coupling of aromatic side chains of the heptapeptide of vancomycin. The sequence is that of Cytochrome P450 165B3 (cyp165B3) from Amycolatopsis orientalis (Nocardia orientalis).